Consider the following 225-residue polypeptide: 7-cyano-7-deazaguanine synthase (225 aa).

8–18 is a binding site for ATP; it reads VSGGADSATVL. Cysteine 188, cysteine 198, cysteine 201, and cysteine 204 together coordinate Zn(2+).

Belongs to the QueC family. Zn(2+) serves as cofactor.

The enzyme catalyses 7-carboxy-7-deazaguanine + NH4(+) + ATP = 7-cyano-7-deazaguanine + ADP + phosphate + H2O + H(+). The protein operates within purine metabolism; 7-cyano-7-deazaguanine biosynthesis. Functionally, catalyzes the ATP-dependent conversion of 7-carboxy-7-deazaguanine (CDG) to 7-cyano-7-deazaguanine (preQ(0)). This is 7-cyano-7-deazaguanine synthase from Rickettsia bellii (strain OSU 85-389).